Here is a 269-residue protein sequence, read N- to C-terminus: Phosphonoacetaldehyde hydrolase (269 aa).

Residue aspartate 10 is the Nucleophile of the active site. Mg(2+) is bound by residues aspartate 10 and alanine 12. Catalysis depends on lysine 52, which acts as the Schiff-base intermediate with substrate. Aspartate 186 contributes to the Mg(2+) binding site.

This sequence belongs to the HAD-like hydrolase superfamily. PhnX family. Homodimer. Mg(2+) serves as cofactor.

It catalyses the reaction phosphonoacetaldehyde + H2O = acetaldehyde + phosphate + H(+). In terms of biological role, involved in phosphonate degradation. The protein is Phosphonoacetaldehyde hydrolase of Salmonella paratyphi A (strain ATCC 9150 / SARB42).